Consider the following 212-residue polypeptide: Adenylate kinase (212 aa).

ATP is bound at residue 10-15 (GAGKGT). Residues 30–59 (STGDMFRAAMANQTEMGRLAKSYIDKGELV) form an NMP region. Residues threonine 31, arginine 36, 57-59 (ELV), 86-89 (GYPR), and glutamine 93 contribute to the AMP site. An LID region spans residues 127–159 (GRIINRKTGETFHKVFNPPVDYKEEDYYQREDD). Residues arginine 128 and 137 to 138 (TF) each bind ATP. Positions 156 and 167 each coordinate AMP. Position 195 (glutamine 195) interacts with ATP.

Belongs to the adenylate kinase family. As to quaternary structure, monomer.

The protein resides in the cytoplasm. It carries out the reaction AMP + ATP = 2 ADP. The protein operates within purine metabolism; AMP biosynthesis via salvage pathway; AMP from ADP: step 1/1. In terms of biological role, catalyzes the reversible transfer of the terminal phosphate group between ATP and AMP. Plays an important role in cellular energy homeostasis and in adenine nucleotide metabolism. This chain is Adenylate kinase, found in Streptococcus agalactiae serotype Ia (strain ATCC 27591 / A909 / CDC SS700).